A 158-amino-acid polypeptide reads, in one-letter code: SsrA-binding protein (158 aa).

This sequence belongs to the SmpB family.

The protein localises to the cytoplasm. Functionally, required for rescue of stalled ribosomes mediated by trans-translation. Binds to transfer-messenger RNA (tmRNA), required for stable association of tmRNA with ribosomes. tmRNA and SmpB together mimic tRNA shape, replacing the anticodon stem-loop with SmpB. tmRNA is encoded by the ssrA gene; the 2 termini fold to resemble tRNA(Ala) and it encodes a 'tag peptide', a short internal open reading frame. During trans-translation Ala-aminoacylated tmRNA acts like a tRNA, entering the A-site of stalled ribosomes, displacing the stalled mRNA. The ribosome then switches to translate the ORF on the tmRNA; the nascent peptide is terminated with the 'tag peptide' encoded by the tmRNA and targeted for degradation. The ribosome is freed to recommence translation, which seems to be the essential function of trans-translation. The chain is SsrA-binding protein from Buchnera aphidicola subsp. Baizongia pistaciae (strain Bp).